The primary structure comprises 301 residues: uncharacterized protein (301 aa).

T47 functions as the Charge relay system in the catalytic mechanism. Y136 serves as the catalytic Proton donor. K165 acts as the Schiff-base intermediate with substrate in catalysis.

This sequence belongs to the DapA family. As to quaternary structure, homotetramer.

It is found in the cytoplasm. This is an uncharacterized protein from Thermofilum pendens (strain DSM 2475 / Hrk 5).